We begin with the raw amino-acid sequence, 405 residues long: MANVLMIGFPGEGHINPSIGVMKELKSRGENITYYAVKEYKEKITALDIEFREYHDFRGDYFGKNATGDEERDFTEMLCAFLKACKDIATHIYEEVKHESYDYVIYDHHLLAGKVIANMLKLPRFSLCTTFAMNEEFAKEMMGAYMKGSLEDSPHYESYQQLAETLNADFQAEIKKPFDVFLADGDLTIVFTSRGFQPLAEQFGERYVFVGPSITERAGNNDFPFDQIDNENVLFISMGTIFNNQKQFFNQCLEVCKDFDGKVVLSIGKHIKTSELNDIPENFIVRPYVPQLEILKRASLFVTHGGMNSTSEGLYFETPLVVIPMGGDQFVVADQVEKVGAGKVIKKEELSESLLKETIQEVMNNRSYAEKAKEIGQSLKAAGGSKKAADSILEAVKQKTQSANA.

The protein belongs to the UDP-glycosyltransferase family.

This is an uncharacterized protein from Bacillus subtilis (strain 168).